Reading from the N-terminus, the 276-residue chain is Dermonecrotic toxin LdSicTox-alphaIB2 (276 aa).

Residue H5 is part of the active site. Mg(2+) is bound by residues E25 and D27. H41 serves as the catalytic Nucleophile. 2 cysteine pairs are disulfide-bonded: C45-C51 and C47-C190. D85 contributes to the Mg(2+) binding site. N253 is a glycosylation site (N-linked (GlcNAc...) asparagine).

It belongs to the arthropod phospholipase D family. Class II subfamily. The cofactor is Mg(2+). As to expression, expressed by the venom gland.

It is found in the secreted. It catalyses the reaction an N-(acyl)-sphingosylphosphocholine = an N-(acyl)-sphingosyl-1,3-cyclic phosphate + choline. The catalysed reaction is an N-(acyl)-sphingosylphosphoethanolamine = an N-(acyl)-sphingosyl-1,3-cyclic phosphate + ethanolamine. It carries out the reaction a 1-acyl-sn-glycero-3-phosphocholine = a 1-acyl-sn-glycero-2,3-cyclic phosphate + choline. The enzyme catalyses a 1-acyl-sn-glycero-3-phosphoethanolamine = a 1-acyl-sn-glycero-2,3-cyclic phosphate + ethanolamine. Functionally, dermonecrotic toxins cleave the phosphodiester linkage between the phosphate and headgroup of certain phospholipids (sphingolipid and lysolipid substrates), forming an alcohol (often choline) and a cyclic phosphate. This toxin acts on sphingomyelin (SM). It may also act on ceramide phosphoethanolamine (CPE), lysophosphatidylcholine (LPC) and lysophosphatidylethanolamine (LPE), but not on lysophosphatidylserine (LPS), and lysophosphatidylglycerol (LPG). It acts by transphosphatidylation, releasing exclusively cyclic phosphate products as second products. Induces dermonecrosis, hemolysis, increased vascular permeability, edema, inflammatory response, and platelet aggregation. In Loxosceles deserta (Desert recluse spider), this protein is Dermonecrotic toxin LdSicTox-alphaIB2.